A 414-amino-acid chain; its full sequence is UDP-N-acetylmuramoylalanine--D-glutamate ligase (414 aa).

Residue 104–110 (GSNGKST) participates in ATP binding.

It belongs to the MurCDEF family.

The protein localises to the cytoplasm. It carries out the reaction UDP-N-acetyl-alpha-D-muramoyl-L-alanine + D-glutamate + ATP = UDP-N-acetyl-alpha-D-muramoyl-L-alanyl-D-glutamate + ADP + phosphate + H(+). It functions in the pathway cell wall biogenesis; peptidoglycan biosynthesis. Cell wall formation. Catalyzes the addition of glutamate to the nucleotide precursor UDP-N-acetylmuramoyl-L-alanine (UMA). This chain is UDP-N-acetylmuramoylalanine--D-glutamate ligase, found in Francisella philomiragia subsp. philomiragia (strain ATCC 25017 / CCUG 19701 / FSC 153 / O#319-036).